We begin with the raw amino-acid sequence, 470 residues long: Sorting nexin-17 (470 aa).

A PX domain is found at 1–109; that stretch reads MHFSIPETES…SFLRRAQQET (109 aa). Residues arginine 36, serine 38, lysine 62, and arginine 75 each contribute to the a 1,2-diacyl-sn-glycero-3-phospho-(1D-myo-inositol-3-phosphate) site. The Ras-associating domain occupies 115-206; that stretch reads EEVSLEVLLS…YKIVLRKSYW (92 aa). The segment at 115 to 432 is FERM-like; sequence EEVSLEVLLS…DATRESMVKL (318 aa). Positions 270–432 are PTB-like F3 module; sequence GYLRFDACVA…DATRESMVKL (163 aa). Phosphoserine is present on residues serine 336, serine 407, serine 409, serine 415, serine 421, serine 437, and serine 440. Residues 400 to 425 are disordered; it reads VGGTLRRSDSQQAVKSPPLLESPDAT.

It belongs to the sorting nexin family. Monomer. Interacts with APP (via cytoplasmic YXNPXY motif). Interacts with KIF1B. Interacts with the C-termini of P-selectin, PTC, LDLR, VLDLR, LRP1 and LRP8. Interacts with KRIT1 (via N-terminus). Interacts with HRAS. Interacts with ITGB1 and ITGB5 (via NPxY motif). Interacts with CCDC22 and CCDC93; the interaction associates SNX17 with the CCC complex. Interacts (via C-terminus) with VPS26C and VPS35L; the interactions are direct and associate SNX17 with the retriever complex.

The protein localises to the cytoplasm. It is found in the early endosome. Its subcellular location is the cytoplasmic vesicle membrane. Critical regulator of endosomal recycling of numerous surface proteins, including integrins, signaling receptor and channels. Binds to NPxY sequences in the cytoplasmic tails of target cargos. Associates with retriever and CCC complexes to prevent lysosomal degradation and promote cell surface recycling of numerous cargos such as integrins ITGB1, ITGB5 and their associated alpha subunits. Also required for maintenance of normal cell surface levels of APP and LRP1. Interacts with membranes containing phosphatidylinositol 3-phosphate (PtdIns(3P)). The sequence is that of Sorting nexin-17 (SNX17) from Pongo abelii (Sumatran orangutan).